The following is a 298-amino-acid chain: Probable 2-(5''-triphosphoribosyl)-3'-dephosphocoenzyme-A synthase 2 (298 aa).

The protein belongs to the CitG/MdcB family.

The catalysed reaction is 3'-dephospho-CoA + ATP = 2'-(5''-triphospho-alpha-D-ribosyl)-3'-dephospho-CoA + adenine. The protein is Probable 2-(5''-triphosphoribosyl)-3'-dephosphocoenzyme-A synthase 2 of Salmonella paratyphi A (strain ATCC 9150 / SARB42).